The primary structure comprises 511 residues: 2,3-bisphosphoglycerate-independent phosphoglycerate mutase (511 aa).

Mn(2+) is bound by residues D14 and S64. S64 acts as the Phosphoserine intermediate in catalysis. Substrate is bound by residues H125, 155–156 (RD), R187, R193, 259–262 (RADR), and K333. Mn(2+) contacts are provided by D400, H404, D441, H442, and H460.

The protein belongs to the BPG-independent phosphoglycerate mutase family. As to quaternary structure, monomer. Mn(2+) serves as cofactor.

It catalyses the reaction (2R)-2-phosphoglycerate = (2R)-3-phosphoglycerate. It functions in the pathway carbohydrate degradation; glycolysis; pyruvate from D-glyceraldehyde 3-phosphate: step 3/5. Catalyzes the interconversion of 2-phosphoglycerate and 3-phosphoglycerate. This is 2,3-bisphosphoglycerate-independent phosphoglycerate mutase from Pseudoalteromonas atlantica (strain T6c / ATCC BAA-1087).